We begin with the raw amino-acid sequence, 288 residues long: ATP synthase gamma chain (288 aa).

The protein belongs to the ATPase gamma chain family. In terms of assembly, F-type ATPases have 2 components, CF(1) - the catalytic core - and CF(0) - the membrane proton channel. CF(1) has five subunits: alpha(3), beta(3), gamma(1), delta(1), epsilon(1). CF(0) has three main subunits: a, b and c.

It localises to the cell inner membrane. In terms of biological role, produces ATP from ADP in the presence of a proton gradient across the membrane. The gamma chain is believed to be important in regulating ATPase activity and the flow of protons through the CF(0) complex. This Vibrio vulnificus (strain CMCP6) protein is ATP synthase gamma chain.